A 378-amino-acid polypeptide reads, in one-letter code: Histidine decarboxylase (378 aa).

H120 is a substrate binding site. Residue K233 is modified to N6-(pyridoxal phosphate)lysine.

It belongs to the group II decarboxylase family. In terms of assembly, homotetramer. Pyridoxal 5'-phosphate is required as a cofactor.

It carries out the reaction L-histidine + H(+) = histamine + CO2. This is Histidine decarboxylase (hdc) from Klebsiella aerogenes (Enterobacter aerogenes).